The primary structure comprises 140 residues: Hexon-interlacing protein (140 aa).

Residues 100–127 (LTALLAQLDSLTRELNVVSQQLLDLRQQ) adopt a coiled-coil conformation. A Phosphoserine; by host modification is found at Ser-135.

This sequence belongs to the adenoviridae hexon-interlacing protein family. As to quaternary structure, homotrimer. Interacts with hexon protein; this interaction tethers the hexons together. Self-interacts with adjacent proteins. Interacts with kinesin light chain KLC1; this interaction leads to capsid disruption at the nuclear pore complex during virus entry into host cell.

The protein localises to the virion. It localises to the host nucleus. Its function is as follows. Structural component of the virion that forms triskelion structures consisting of three molecules that stabilize three hexon trimers at the center of each icosahedral facet and fixes the peripentonal hexons. Dispensable for assembly. During virus entry, recruits the anterograde motor kinesin-1 to the capsid docked at the nuclear pore complex thereby subjecting the docked capsid to a pulling force. The resulting tension leads to capsid disruption, dispersion of capsid fragments toward cell periphery and eventually viral DNA entry into the host nucleus. This chain is Hexon-interlacing protein, found in Human adenovirus C serotype 2 (HAdV-2).